An 84-amino-acid polypeptide reads, in one-letter code: Large ribosomal subunit protein bL27 (84 aa).

A disordered region spans residues 1 to 20; it reads MAHKKAGGSTRNGRDSNPKY.

Belongs to the bacterial ribosomal protein bL27 family.

The protein is Large ribosomal subunit protein bL27 of Francisella philomiragia subsp. philomiragia (strain ATCC 25017 / CCUG 19701 / FSC 153 / O#319-036).